Reading from the N-terminus, the 748-residue chain is MRVLVLVASLGLRGSVVKDDTTVVIGKDNMVTMDIKMKELCILKLLNHILQPTMYDDIREVAREWVIEENMDKYLKTDVVKKFIDTFKMGMLPRGEVFVHTNELHLEQAVKVFKIMYSAKDFDVFIRTACWLRERINGGMFVYALTACVFHRTDCRGITLPAPYEIYPYVFVDSHIINKAFMMKMTKAARDPVMLDYYGIKVTDKNLVVIDWRKGVRRTLTEHDRISYFTEDIDLNTYMYYLHMSYPFWMTDDMYTVNKERRGEIMGTYTQLLARLRLERLSHEMCDIKSIMWNEPLKTGYWPKIRLHTGDEMPVRSNNKIIVTKENVKVKRMLDDVERMLRDGILTGKIERRDGTIINLKKAEDVEHLARLLLGGMGLVGDDAKFMHMMHLMKRLLSYNVYNFDKYTYVPTALDLYSTCLRDPVFWRLMKRVTDTFFLFKKMLPKYTREDFDFPGVKIEKFTTDKLTTFIDEYDMDITNAMFLDDVEMKKKRSDMTMVARMARLNHHPFKVTVDVTSDKTVDCVVRIFIGPKYDCLGRLMSVNDKRMDMIEMDTFLYKLETGKNTIVRNSLEMHGVIEQRPWTRRILNNMIGTVGTISKTVDVESWWYKRHRLPHRMLLPLGRRGGMPMQMFVIVTPVKTNLLLPNLDMNIMKERKTCAGASVSTRCRSGFPFDRKIDMTHFFTRNMKFTDVMIFRKDLSLSNTIKDVDMSDMMMKKDDLTYLDSDMLVRWSYKAVMMMSKDDMMRM.

A signal peptide spans 1–17 (MRVLVLVASLGLRGSVV).

The protein belongs to the hemocyanin family. Fat body, and hemolymph of larvae.

This is Basic juvenile hormone-suppressible protein 1 (BJSP-1) from Trichoplusia ni (Cabbage looper).